A 277-amino-acid polypeptide reads, in one-letter code: Bis(5'-nucleosyl)-tetraphosphatase, symmetrical (277 aa).

The protein belongs to the Ap4A hydrolase family.

It catalyses the reaction P(1),P(4)-bis(5'-adenosyl) tetraphosphate + H2O = 2 ADP + 2 H(+). Functionally, hydrolyzes diadenosine 5',5'''-P1,P4-tetraphosphate to yield ADP. This chain is Bis(5'-nucleosyl)-tetraphosphatase, symmetrical, found in Azotobacter vinelandii (strain DJ / ATCC BAA-1303).